Here is a 243-residue protein sequence, read N- to C-terminus: 1-(5-phosphoribosyl)-5-[(5-phosphoribosylamino)methylideneamino] imidazole-4-carboxamide isomerase (243 aa).

The active-site Proton acceptor is the aspartate 8. Aspartate 129 functions as the Proton donor in the catalytic mechanism.

The protein belongs to the HisA/HisF family.

Its subcellular location is the cytoplasm. The enzyme catalyses 1-(5-phospho-beta-D-ribosyl)-5-[(5-phospho-beta-D-ribosylamino)methylideneamino]imidazole-4-carboxamide = 5-[(5-phospho-1-deoxy-D-ribulos-1-ylimino)methylamino]-1-(5-phospho-beta-D-ribosyl)imidazole-4-carboxamide. Its pathway is amino-acid biosynthesis; L-histidine biosynthesis; L-histidine from 5-phospho-alpha-D-ribose 1-diphosphate: step 4/9. This is 1-(5-phosphoribosyl)-5-[(5-phosphoribosylamino)methylideneamino] imidazole-4-carboxamide isomerase from Carboxydothermus hydrogenoformans (strain ATCC BAA-161 / DSM 6008 / Z-2901).